We begin with the raw amino-acid sequence, 206 residues long: Large ribosomal subunit protein uL22m (206 aa).

The transit peptide at 1–40 directs the protein to the mitochondrion; the sequence is MAAAVLGQLGALWIHNLRSRGKLALGVLPQSYIHTSASLD.

It belongs to the universal ribosomal protein uL22 family. In terms of assembly, component of the mitochondrial large ribosomal subunit (mt-LSU). Mature mammalian 55S mitochondrial ribosomes consist of a small (28S) and a large (39S) subunit. The 28S small subunit contains a 12S ribosomal RNA (12S mt-rRNA) and 30 different proteins. The 39S large subunit contains a 16S rRNA (16S mt-rRNA), a copy of mitochondrial valine transfer RNA (mt-tRNA(Val)), which plays an integral structural role, and 52 different proteins.

It localises to the mitochondrion. The sequence is that of Large ribosomal subunit protein uL22m (MRPL22) from Homo sapiens (Human).